A 388-amino-acid chain; its full sequence is Xylose isomerase (388 aa).

Catalysis depends on residues His54 and Asp57. Mg(2+) contacts are provided by Glu181, Glu217, His220, Asp245, Asp255, Asp257, and Asp287.

The protein belongs to the xylose isomerase family. As to quaternary structure, homotetramer. Mg(2+) serves as cofactor.

The protein localises to the cytoplasm. The enzyme catalyses alpha-D-xylose = alpha-D-xylulofuranose. The polypeptide is Xylose isomerase (Streptomyces corchorusii (Streptomyces chibaensis)).